The primary structure comprises 480 residues: Caspase-8 (480 aa).

Residues 1-218 (MDFQSCLYAI…ELCDSPREQD (218 aa)) constitute a propeptide that is removed on maturation. 2 DED domains span residues 3 to 80 (FQSC…NFLD) and 101 to 177 (YRVM…KIED). 2 positions are modified to phosphoserine: Ser188 and Ser213. An N6-acetyllysine modification is found at Lys226. His319 is an active-site residue. Position 336 is a phosphotyrosine (Tyr336). Cys362 is an active-site residue. The propeptide occupies 377–387 (FEQQNHTLEVD). The residue at position 389 (Ser389) is a Phosphoserine; by CDK1.

It belongs to the peptidase C14A family. In terms of assembly, heterotetramer that consists of two anti-parallel arranged heterodimers, each one formed by a 18 kDa (p18) and a 10 kDa (p10) subunit. Component of the death-induced signaling complex (DISC) composed of cell surface receptor FAS/CD95 or TNFRSF1A, adapter protein FADD and the CASP8 protease; recruitment of CASP8 to the complex is required for processing of CASP8 into the p18 and p10 subunits. Component of the AIM2 PANoptosome complex, a multiprotein complex that drives inflammatory cell death (PANoptosis). Interacts with CFLAR and PEA15. Interacts with RFFL and RNF34; negatively regulate CASP8 through proteasomal degradation. Interacts with TNFAIP8L2. Interacts with CASP8AP2. Interacts with NOL3; decreases CASP8 activity in a mitochondria localization- and phosphorylation-dependent manner and this interaction is dissociated by calcium. Interacts with UBR2. Interacts with RIPK1. Interacts with stimulated TNFRSF10B; this interaction is followed by CASP8 proteolytic cleavage and activation. Generation of the subunits requires association with the death-inducing signaling complex (DISC), whereas additional processing is likely due to the autocatalytic activity of the activated protease. GZMB and CASP10 can be involved in these processing events. In terms of processing, (Microbial infection) Proteolytically cleaved by the cowpox virus CRMA death inhibitory protein. Post-translationally, phosphorylation on Ser-389 during mitosis by CDK1 inhibits activation by proteolysis and prevents apoptosis. This phosphorylation occurs in cancer cell lines, as well as in primary breast tissues and lymphocytes. In terms of tissue distribution, expressed in a wide variety of tissues. Highest expression in spleen, thymus, lung, liver and kidney. Lower expression in heart, brain, testis and skeletal muscle.

The protein localises to the cytoplasm. Its subcellular location is the nucleus. It carries out the reaction Strict requirement for Asp at position P1 and has a preferred cleavage sequence of (Leu/Asp/Val)-Glu-Thr-Asp-|-(Gly/Ser/Ala).. Its activity is regulated as follows. CASP8 activity is restricted by RIPK1. With respect to regulation, (Microbial infection) Inhibited by baculovirus p35 protein P35. In terms of biological role, thiol protease that plays a key role in programmed cell death by acting as a molecular switch for apoptosis, necroptosis and pyroptosis, and is required to prevent tissue damage during embryonic development and adulthood. Initiator protease that induces extrinsic apoptosis by mediating cleavage and activation of effector caspases responsible for FAS/CD95-mediated and TNFRSF1A-induced cell death. Cleaves and activates effector caspases CASP3, CASP4, CASP6, CASP7, CASP9 and CASP10. Binding to the adapter molecule FADD recruits it to either receptor FAS/CD95 or TNFRSF1A. The resulting aggregate called the death-inducing signaling complex (DISC) performs CASP8 proteolytic activation. The active dimeric enzyme is then liberated from the DISC and free to activate downstream apoptotic proteases. Proteolytic fragments of the N-terminal propeptide (termed CAP3, CAP5 and CAP6) are likely retained in the DISC. In addition to extrinsic apoptosis, also acts as a negative regulator of necroptosis: acts by cleaving RIPK1 at 'Asp-325', which is crucial to inhibit RIPK1 kinase activity, limiting TNF-induced apoptosis, necroptosis and inflammatory response. Also able to initiate pyroptosis by mediating cleavage and activation of gasdermin-C and -D (GSDMC and GSDMD, respectively): gasdermin cleavage promotes release of the N-terminal moiety that binds to membranes and forms pores, triggering pyroptosis. Initiates pyroptosis following inactivation of MAP3K7/TAK1. Also acts as a regulator of innate immunity by mediating cleavage and inactivation of N4BP1 downstream of TLR3 or TLR4, thereby promoting cytokine production. May participate in the Granzyme B (GZMB) cell death pathways. Cleaves PARP1 and PARP2. The sequence is that of Caspase-8 from Mus musculus (Mouse).